A 342-amino-acid chain; its full sequence is Large ribosomal subunit protein uL10 (342 aa).

Residues 212 to 342 (EYIDMLQKAY…ALAGLSALFG (131 aa)) are required for interaction with ribosomal protein L12 dimers. The span at 299–308 (QAQVAVATQP) shows a compositional bias: polar residues. Residues 299-342 (QAQVAVATQPSEEEKKEEEKTEEEEKEEEASEEEALAGLSALFG) are disordered. Positions 318–333 (KTEEEEKEEEASEEEA) are enriched in acidic residues.

It belongs to the universal ribosomal protein uL10 family. In terms of assembly, part of the 50S ribosomal subunit, binds large rRNA. Forms the ribosomal stalk which helps the ribosome interact with GTP-bound translation factors. Forms a heptameric L10(L12)2(L12)2(L12)2 complex, where L10 forms an elongated spine to which the L12 dimers bind in a sequential fashion.

In terms of biological role, forms the large subunit's ribosomal stalk, playing a central role in the interaction of the ribosome with elongation factors; the stalk complex of P.horikoshii binds to E.coli large subunits and confers on them the ability to interact with eukaryotic elongation factors. Each succesive L12 dimer bound along the P0 spine increases the GTPase activity of elongation factors and increases translation by reconsituted ribosomes, although the first site is the most stimulatory. The sequence is that of Large ribosomal subunit protein uL10 from Pyrococcus horikoshii (strain ATCC 700860 / DSM 12428 / JCM 9974 / NBRC 100139 / OT-3).